The following is a 52-amino-acid chain: ATP synthase protein 8 (52 aa).

The helical transmembrane segment at 6 to 26 (PINGFVILCSISLMLLTLLIN) threads the bilayer.

This sequence belongs to the ATPase protein 8 family. In terms of assembly, F-type ATPases have 2 components, CF(1) - the catalytic core - and CF(0) - the membrane proton channel.

The protein resides in the mitochondrion membrane. In terms of biological role, mitochondrial membrane ATP synthase (F(1)F(0) ATP synthase or Complex V) produces ATP from ADP in the presence of a proton gradient across the membrane which is generated by electron transport complexes of the respiratory chain. F-type ATPases consist of two structural domains, F(1) - containing the extramembraneous catalytic core and F(0) - containing the membrane proton channel, linked together by a central stalk and a peripheral stalk. During catalysis, ATP synthesis in the catalytic domain of F(1) is coupled via a rotary mechanism of the central stalk subunits to proton translocation. Part of the complex F(0) domain. Minor subunit located with subunit a in the membrane. The sequence is that of ATP synthase protein 8 (MT-ATP8) from Albinaria turrita (Door snail).